The following is a 395-amino-acid chain: MTAYDMEKEWSRISITAAKIHQNNDFEGFTYQDFRTHVPIMDKDGFAAQTERCLERNERNCLIGFTSGTSGNIKRCYYYYDCEVDEDSSLSNVFRSNGFILPGDRCANLFTINLFSALNNTITMMAGNCGAHVVSVGDITLVTKSHFEALNSIKLNVLLGVPSTILQFINAMQHNGVHINIEKVVFTGESLKTFQKKIIRQAFGEQVSIVGVYGSSEGGILGFTNSPCHTEYEFLSDKYFIEKEGDSILITSLTRENFTPLLRYRLGDTATLSMKGDKLYLTDIQREDMSFNFMGNLIGLGIIQQTIKQTLGRSLEIQVHLSVTEERKELVTVFVQASEVDEDERVRIETAIADIPDIKEAYQKNQGTVSVLRKDARDYAVSERGKMLYIIDRRN.

It belongs to the ATP-dependent AMP-binding enzyme family.

The catalysed reaction is (indol-3-yl)acetate + L-lysine + ATP = N(6)-[(indole-3-yl)acetyl]-L-lysine + ADP + phosphate + H(+). In terms of biological role, conversion of IAA to IAA-lysine. This is Indoleacetate--lysine synthetase (iaaL) from Pseudomonas savastanoi (Pseudomonas syringae pv. savastanoi).